The primary structure comprises 390 residues: Succinate--CoA ligase [ADP-forming] subunit beta (390 aa).

In terms of domain architecture, ATP-grasp spans 9-248 (KEILRRHKAN…ITEEDPLEVQ (240 aa)). ATP contacts are provided by residues Lys50, 57–59 (GRG), Glu103, Ile106, and Glu111. Residues Asn203 and Asp217 each coordinate Mg(2+). Residues Asn268 and 325–327 (GIV) contribute to the substrate site.

Belongs to the succinate/malate CoA ligase beta subunit family. As to quaternary structure, heterotetramer of two alpha and two beta subunits. It depends on Mg(2+) as a cofactor.

The catalysed reaction is succinate + ATP + CoA = succinyl-CoA + ADP + phosphate. The enzyme catalyses GTP + succinate + CoA = succinyl-CoA + GDP + phosphate. It participates in carbohydrate metabolism; tricarboxylic acid cycle; succinate from succinyl-CoA (ligase route): step 1/1. Succinyl-CoA synthetase functions in the citric acid cycle (TCA), coupling the hydrolysis of succinyl-CoA to the synthesis of either ATP or GTP and thus represents the only step of substrate-level phosphorylation in the TCA. The beta subunit provides nucleotide specificity of the enzyme and binds the substrate succinate, while the binding sites for coenzyme A and phosphate are found in the alpha subunit. The polypeptide is Succinate--CoA ligase [ADP-forming] subunit beta (Leptospira borgpetersenii serovar Hardjo-bovis (strain JB197)).